The sequence spans 446 residues: Exopolygalacturonase (446 aa).

Residues 1 to 17 (MRVTDIISCALLQASIA) form the signal peptide. Asn53, Asn118, Asn134, and Asn204 each carry an N-linked (GlcNAc...) asparagine glycan. The PbH1 1 repeat unit spans residues 236–257 (SDNIIIQNSNINNGDDCVSFKP). Asp250 serves as the catalytic Proton donor. The cysteines at positions 252 and 269 are disulfide-linked. 2 N-linked (GlcNAc...) asparagine glycosylation sites follow: Asn258 and Asn270. PbH1 repeat units lie at residues 259-279 (STNI…SVGS), 290-311 (VENI…RIKV), and 332-353 (VRNV…EITQ). His273 is a catalytic residue. N-linked (GlcNAc...) asparagine glycosylation is found at Asn297, Asn302, Asn334, Asn359, and Asn369. PbH1 repeat units lie at residues 367-398 (PSNL…VVCS) and 403-434 (CSDI…QSQV). 2 cysteine pairs are disulfide-bonded: Cys397/Cys403 and Cys424/Cys436. An N-linked (GlcNAc...) asparagine glycan is attached at Asn435.

The protein belongs to the glycosyl hydrolase 28 family.

The protein resides in the secreted. The enzyme catalyses [(1-&gt;4)-alpha-D-galacturonosyl](n) + H2O = alpha-D-galacturonate + [(1-&gt;4)-alpha-D-galacturonosyl](n-1). Functionally, hydrolysis of 1,4-alpha-D-galactosiduronic linkages in pectate and other galacturonans. The polypeptide is Exopolygalacturonase (PGX1) (Cochliobolus carbonum (Maize leaf spot fungus)).